We begin with the raw amino-acid sequence, 295 residues long: uncharacterized protein (295 aa).

A compositionally biased stretch (basic residues) spans 57–67; sequence RKLLVKQKRKS. Positions 57 to 94 are disordered; the sequence is RKLLVKQKRKSNKEFQSNIIKKRKDEERKGTLKTEQAN. Residues 79 to 88 are compositionally biased toward basic and acidic residues; it reads RKDEERKGTL. 2 coiled-coil regions span residues 87-116 and 259-286; these read TLKTEQANEEELLQRSRLELERKAKKYDQY and DVLTLRDKKLEERRKFLERDYAIKLGER.

The protein localises to the nucleus. This is an uncharacterized protein from Schizosaccharomyces pombe (strain 972 / ATCC 24843) (Fission yeast).